Consider the following 369-residue polypeptide: Anhydro-N-acetylmuramic acid kinase (369 aa).

12-19 (GTSLDGVD) lines the ATP pocket.

The protein belongs to the anhydro-N-acetylmuramic acid kinase family.

It carries out the reaction 1,6-anhydro-N-acetyl-beta-muramate + ATP + H2O = N-acetyl-D-muramate 6-phosphate + ADP + H(+). It functions in the pathway amino-sugar metabolism; 1,6-anhydro-N-acetylmuramate degradation. Its pathway is cell wall biogenesis; peptidoglycan recycling. In terms of biological role, catalyzes the specific phosphorylation of 1,6-anhydro-N-acetylmuramic acid (anhMurNAc) with the simultaneous cleavage of the 1,6-anhydro ring, generating MurNAc-6-P. Is required for the utilization of anhMurNAc either imported from the medium or derived from its own cell wall murein, and thus plays a role in cell wall recycling. This Escherichia coli O7:K1 (strain IAI39 / ExPEC) protein is Anhydro-N-acetylmuramic acid kinase.